Consider the following 605-residue polypeptide: Pyruvate decarboxylase 1 (605 aa).

Substrate-binding residues include D67 and H154. The thiamine pyrophosphate binding stretch occupies residues 432–514; the sequence is DSWFNCQKLR…FLINNGGYTI (83 aa). Positions 482, 509, and 511 each coordinate Mg(2+). E515 contributes to the substrate binding site.

This sequence belongs to the TPP enzyme family. Homotetramer. It depends on a metal cation as a cofactor. Thiamine diphosphate is required as a cofactor.

The catalysed reaction is a 2-oxocarboxylate + H(+) = an aldehyde + CO2. In Oryza sativa subsp. indica (Rice), this protein is Pyruvate decarboxylase 1 (PDC1).